We begin with the raw amino-acid sequence, 334 residues long: Procathepsin L (334 aa).

A signal peptide spans 1-17; that stretch reads MTPLLLLAVLCLGTALA. Residues 18-113 constitute a propeptide, activation peptide; it reads TPKFDQTFNA…RLFQEPLMLQ (96 aa). E122 lines the Zn(2+) pocket. Cystine bridges form between C135–C178 and C169–C211. Residue C138 is part of the active site. Zn(2+)-binding residues include E163, D184, E199, E205, D227, D250, H253, D273, and D275. Residues C269 and C322 are joined by a disulfide bond. H276 is a catalytic residue. Residues 289–290 constitute a propeptide that is removed on maturation; the sequence is DS. The active site involves N300.

It belongs to the peptidase C1 family. Dimer of a heavy and a light chain linked by disulfide bonds. Interacts with Long isoform of CD74/Ii chain; the interaction stabilizes the conformation of mature CTSL. During export along the endocytic pathway, pro-CTSL undergoes several proteolytic cleavages to generate the CTSL single-chain and two-chain mature forms, composed of a heavy chain linked to a light chain by disulfide bonds. Autocleavage; produces the single-chain CTSL after cleavage of the propeptide. The cleavage can be intermolecular. Both mature cathepsin L1 and procathepsin L are found in the upper epidermis. The lower epidermis predominantly contains procathepsin L. In seminiferous tubules expression is greater at stages VI-VII than at stages IX-XII.

It localises to the lysosome. It is found in the apical cell membrane. The protein resides in the cytoplasmic vesicle. Its subcellular location is the secretory vesicle. The protein localises to the chromaffin granule. It localises to the secreted. It is found in the extracellular space. It carries out the reaction Specificity close to that of papain. As compared to cathepsin B, cathepsin L exhibits higher activity toward protein substrates, but has little activity on Z-Arg-Arg-NHMec, and no peptidyl-dipeptidase activity.. Inhibited by the propeptide produced by autocleavage. Long isoform of CD74/Ii chain stabilizes the conformation of mature CTSL by binding to its active site and serving as a chaperone to help maintain a pool of mature enzyme in endocytic compartments and extracellular space of APCs. IFNG enhances the conversion into the CTSL mature and active form. Inhibited by CST6. Inhibited by the glycopeptide antibiotic teicoplanin. Inhibited by amantadine. Its function is as follows. Thiol protease important for the overall degradation of proteins in lysosomes. Plays a critical for normal cellular functions such as general protein turnover, antigen processing and bone remodeling. Involved in the solubilization of cross-linked TG/thyroglobulin and in the subsequent release of thyroid hormone thyroxine (T4) by limited proteolysis of TG/thyroglobulin in the thyroid follicle lumen. In neuroendocrine chromaffin cells secretory vesicles, catalyzes the prohormone proenkephalin processing to the active enkephalin peptide neurotransmitter. In thymus, regulates CD4(+) T cell positive selection by generating the major histocompatibility complex class II (MHCII) bound peptide ligands presented by cortical thymic epithelial cells. Also mediates invariant chain processing in cortical thymic epithelial cells. Major elastin-degrading enzyme at neutral pH. Accumulates as a mature and active enzyme in the extracellular space of antigen presenting cells (APCs) to regulate degradation of the extracellular matrix in the course of inflammation. Secreted form generates endostatin from COL18A1. Critical for cardiac morphology and function. Plays an important role in hair follicle morphogenesis and cycling, as well as epidermal differentiation. Required for maximal stimulation of steroidogenesis by TIMP1. The sequence is that of Procathepsin L from Rattus norvegicus (Rat).